The chain runs to 260 residues: Ubiquinone/menaquinone biosynthesis C-methyltransferase UbiE (260 aa).

S-adenosyl-L-methionine is bound by residues Thr83, Asp104, and 132 to 133; that span reads NA.

The protein belongs to the class I-like SAM-binding methyltransferase superfamily. MenG/UbiE family.

It carries out the reaction a 2-demethylmenaquinol + S-adenosyl-L-methionine = a menaquinol + S-adenosyl-L-homocysteine + H(+). The catalysed reaction is a 2-methoxy-6-(all-trans-polyprenyl)benzene-1,4-diol + S-adenosyl-L-methionine = a 5-methoxy-2-methyl-3-(all-trans-polyprenyl)benzene-1,4-diol + S-adenosyl-L-homocysteine + H(+). Its pathway is quinol/quinone metabolism; menaquinone biosynthesis; menaquinol from 1,4-dihydroxy-2-naphthoate: step 2/2. It participates in cofactor biosynthesis; ubiquinone biosynthesis. In terms of biological role, methyltransferase required for the conversion of demethylmenaquinol (DMKH2) to menaquinol (MKH2) and the conversion of 2-polyprenyl-6-methoxy-1,4-benzoquinol (DDMQH2) to 2-polyprenyl-3-methyl-6-methoxy-1,4-benzoquinol (DMQH2). This is Ubiquinone/menaquinone biosynthesis C-methyltransferase UbiE from Bartonella tribocorum (strain CIP 105476 / IBS 506).